A 94-amino-acid polypeptide reads, in one-letter code: Small ribosomal subunit protein bS18 (94 aa).

This sequence belongs to the bacterial ribosomal protein bS18 family. Part of the 30S ribosomal subunit. Forms a tight heterodimer with protein bS6.

In terms of biological role, binds as a heterodimer with protein bS6 to the central domain of the 16S rRNA, where it helps stabilize the platform of the 30S subunit. In Polaromonas sp. (strain JS666 / ATCC BAA-500), this protein is Small ribosomal subunit protein bS18.